The chain runs to 168 residues: Coiled-coil domain-containing protein 200 (168 aa).

A coiled-coil region spans residues 16–50; the sequence is LDRRRWLMAQQQQELQQKEQELKNHQEEEQQSEEK. The tract at residues 23–168 is disordered; the sequence is MAQQQQELQQ…LKSTNYIQQW (146 aa). Basic and acidic residues predominate over residues 31–52; it reads QQKEQELKNHQEEEQQSEEKLQ. Residues 70–82 are compositionally biased toward low complexity; sequence SQEQPQPSQQQPS. 2 stretches are compositionally biased toward pro residues: residues 83–94 and 104–117; these read VQPPSQPPPQPS and GPQP…PQPT. Polar residues-rich tracts occupy residues 124–138 and 145–168; these read RCTQ…QDSQ and PCQS…IQQW.

The polypeptide is Coiled-coil domain-containing protein 200 (Homo sapiens (Human)).